We begin with the raw amino-acid sequence, 519 residues long: Na(+)/H(+) exchange regulatory cofactor NHE-RF3 (519 aa).

The PDZ 1 domain occupies 9–90 (ECKLSKQEGQ…SVTLLVLDGD (82 aa)). A phosphoserine mark is found at Ser108, Ser148, Ser192, Ser250, Ser334, and Ser348. PDZ domains are found at residues 134–215 (RLCY…VDKE) and 243–323 (IVEM…VDKE). The segment at 347-374 (GSVKEAPAPTPTSLEVSSPPDTTEEVDH) is disordered. Residues 357–367 (PTSLEVSSPPD) show a composition bias toward polar residues. The PDZ 4 domain maps to 378–458 (LCRLAKGENG…NVTLLVCGKK (81 aa)). Thr451 bears the Phosphothreonine mark. The tract at residues 479–519 (DTPPDSKEGIVVESNHDSHMAKERAHSTASHSSSNSEDTEM) is disordered. The segment covering 482 to 504 (PDSKEGIVVESNHDSHMAKERAH) has biased composition (basic and acidic residues). Residues Ser492, Ser508, Ser510, Ser511, Ser512, and Ser514 each carry the phosphoserine modification. The segment covering 505–519 (STASHSSSNSEDTEM) has biased composition (low complexity).

The protein belongs to the NHER family. In terms of assembly, interacts with PDZK1IP1 and ABCC2. Interacts (via PDZ domains 1 and 3) with SCARB1 (C-terminal domain). Forms a heterodimeric complex with NHERF1. Interacts with AKAP2, BCR, CFTR, SLC22A12, SLC22A4, SLC22A5, NHERF2 and SLC17A1. Component of a complex, composed of PDZK1, SYNGAP1, KLHL17 and NMDA receptors. Interacts (via PDZ1 domain) directly with KLHL17; the interaction is important for integrity of actin cytoskeleton structures in neurons. Interacts (via the first PDZ domain) with PTGIR (via non-isoprenylated C-terminus). Interacts (via C-terminal PDZ domain) with SLC26A6 (via C-terminal domain). Interacts (via C-terminal PDZ domain) with SLC9A3 (via C-terminal domain). Interacts (via PDZ domains 1 and 3) with SLC5A8 (via PDZ-binding motif); interaction increases nicotinate transport activity of SLC5A8. Expression is limited to epithelial cells. Expressed in the kidney (brush border of proximal tubule), pancreas, liver, and small intestine. Expressed at a lower level in the adrenal cortex, testis and stomach. Overexpressed in breast, renal and lung carcinomas.

It localises to the membrane. It is found in the cell membrane. Its function is as follows. A scaffold protein that connects plasma membrane proteins and regulatory components, regulating their surface expression in epithelial cells apical domains. May be involved in the coordination of a diverse range of regulatory processes for ion transport and second messenger cascades. In complex with NHERF1, may cluster proteins that are functionally dependent in a mutual fashion and modulate the trafficking and the activity of the associated membrane proteins. May play a role in the cellular mechanisms associated with multidrug resistance through its interaction with ABCC2 and PDZK1IP1. May potentiate the CFTR chloride channel activity. Required for normal cell-surface expression of SCARB1. Plays a role in maintaining normal plasma cholesterol levels via its effects on SCARB1. Plays a role in the normal localization and function of the chloride-anion exchanger SLC26A6 to the plasma membrane in the brush border of the proximal tubule of the kidney. May be involved in the regulation of proximal tubular Na(+)-dependent inorganic phosphate cotransport therefore playing an important role in tubule function. In Homo sapiens (Human), this protein is Na(+)/H(+) exchange regulatory cofactor NHE-RF3 (PDZK1).